Consider the following 435-residue polypeptide: Cell adhesion molecule 2 (435 aa).

The N-terminal stretch at 1-24 (MIWKRSAVLRFYSVCGLLLQGSQG) is a signal peptide. Over 25 to 367 (QFPLTQNVTV…ALAGQNGPDH (343 aa)) the chain is Extracellular. The region spanning 27-119 (PLTQNVTVVE…PVKTSKAYLT (93 aa)) is the Ig-like V-type domain. N-linked (GlcNAc...) asparagine glycans are attached at residues Asn-31 and Asn-51. 3 disulfides stabilise this stretch: Cys-44/Cys-104, Cys-146/Cys-203, and Cys-248/Cys-296. Ig-like C2-type domains lie at 127–219 (PQIS…VAMQ) and 227–312 (PSVK…YVLI). Asn-291 carries an N-linked (GlcNAc...) asparagine glycan. A helical transmembrane segment spans residues 368 to 388 (ALIGGIVAVVVFVTLCSIFLL). The Cytoplasmic portion of the chain corresponds to 389-435 (GRYLARHKGTYLTNEAKGAEDAPDADTAIINAEGSQVNAEEKKEYFI). Position 423 is a phosphoserine (Ser-423).

The protein belongs to the nectin family.

The protein localises to the cell membrane. The protein resides in the synapse. Its subcellular location is the cell projection. It is found in the axon. Adhesion molecule that engages in homo- and heterophilic interactions with the other nectin-like family members, leading to cell aggregation. Important for synapse organization, providing regulated trans-synaptic adhesion. Preferentially binds to oligodendrocytes. Functionally, (Microbial infection) Induces cell fusion in neuron infected by a neuropathogenic strain of measles. Interacts with measles hemagglutinin to trigger hyperfusogenic F-mediated membrane fusion and presumably transsynaptic cell-to-cell transmission of the virus. The protein is Cell adhesion molecule 2 (CADM2) of Homo sapiens (Human).